The following is a 101-amino-acid chain: uncharacterized protein (101 aa).

Helical transmembrane passes span 20 to 40 (KHFI…LLGL), 59 to 79 (GVIA…MYIA), and 81 to 101 (SEMW…ALFF).

It is found in the endoplasmic reticulum. The protein resides in the membrane. This is an uncharacterized protein from Saccharomyces cerevisiae (strain ATCC 204508 / S288c) (Baker's yeast).